A 458-amino-acid polypeptide reads, in one-letter code: N-acetylgalactosamine kinase (458 aa).

4 residues coordinate alpha-D-galactose: R43, E49, H50, and D52. ATP contacts are provided by G143, S145, and S146. D190 contributes to the alpha-D-galactose binding site. D190 acts as the Proton acceptor in catalysis. Residues N233 and K234 each contribute to the ATP site.

It belongs to the GHMP kinase family. GalK subfamily. Monomer.

It carries out the reaction N-acetyl-alpha-D-galactosamine + ATP = N-acetyl-alpha-D-galactosamine 1-phosphate + ADP + H(+). Functionally, acts on GalNAc. Also acts as a galactokinase when galactose is present at high concentrations. In Pongo abelii (Sumatran orangutan), this protein is N-acetylgalactosamine kinase (GALK2).